The primary structure comprises 336 residues: NADH-quinone oxidoreductase subunit H (336 aa).

Transmembrane regions (helical) follow at residues 14 to 34, 82 to 102, 115 to 135, 161 to 181, 186 to 206, 247 to 267, 273 to 293, and 312 to 332; these read IIVA…AFLV, IIFL…WAVI, VGIL…IMAG, IGLV…SDVV, TVWF…SALA, ILMS…PLDV, VPGP…FVWV, and VFLP…VTFD.

It belongs to the complex I subunit 1 family. In terms of assembly, NDH-1 is composed of 14 different subunits. Subunits NuoA, H, J, K, L, M, N constitute the membrane sector of the complex.

The protein resides in the cell inner membrane. It carries out the reaction a quinone + NADH + 5 H(+)(in) = a quinol + NAD(+) + 4 H(+)(out). Functionally, NDH-1 shuttles electrons from NADH, via FMN and iron-sulfur (Fe-S) centers, to quinones in the respiratory chain. The immediate electron acceptor for the enzyme in this species is believed to be ubiquinone. Couples the redox reaction to proton translocation (for every two electrons transferred, four hydrogen ions are translocated across the cytoplasmic membrane), and thus conserves the redox energy in a proton gradient. This subunit may bind ubiquinone. In Rhodospirillum centenum (strain ATCC 51521 / SW), this protein is NADH-quinone oxidoreductase subunit H.